A 69-amino-acid chain; its full sequence is MSESDNCFSSSSILLDGTTSVALFSFSPGYRDVSTSVIQSSKQAMKRPNMNQEKAIQTSCNLNSSVVRS.

This is an uncharacterized protein from Saccharomyces cerevisiae (strain ATCC 204508 / S288c) (Baker's yeast).